The primary structure comprises 116 residues: Vesicle-associated membrane protein 2 (116 aa).

A disordered region spans residues 1–28 (MSATAATVPPAAPAGEGGPPAPPPNLTS). At Ser2 the chain carries N-acetylserine. The Cytoplasmic segment spans residues 2-94 (SATAATVPPA…KRKYWWKNLK (93 aa)). One can recognise a v-SNARE coiled-coil homology domain in the interval 31-91 (RLQQTQAQVD…AKLKRKYWWK (61 aa)). The tract at residues 92–116 (NLKMMIILGVICAIILIIIIVYFST) is required for interaction with SEPT8. Residues 95–114 (MMIILGVICAIILIIIIVYF) form a helical; Anchor for type IV membrane protein membrane-spanning segment. Topologically, residues 115–116 (ST) are vesicular.

Belongs to the synaptobrevin family. In terms of assembly, part of the SNARE core complex containing SNAP25, VAMP2 and STX1A; this complex constitutes the basic catalytic machinery of the complex neurotransmitter release apparatus. Recruited to the SNARE complex following binding of the SNARE complex component STX1A to STXBP1. This complex binds to CPLX1. Interacts with VAPA and VAPB. Interacts (via N-terminus) with KCNB1 (via N-terminus and C-terminus); stimulates the channel inactivation rate of KCNB1. Interacts with POPDC1 and STX4. Interacts with WDFY2, PRKCZ and PRKCI. Forms a complex with WDFY2 and PRKCZ. Interacts with SEPT8; the interaction inhibits interaction of VAMP2 with SYP. Interacts with SYP; the interaction is inhibited by interaction with SEPT8. Interacts with PICALM. Interacts with alpha-synuclein/SNCA. Interacts with STX3 isoform 3B. Phosphorylated by PRKCZ in vitro and this phosphorylation is increased in the presence of WDFY2. Post-translationally, (Microbial infection) Targeted and hydrolyzed by C.botulinum neurotoxin type B (BoNT/B, botB); 20 hours after treatment of spinal cord cells almost all the protein has been digested. BoNT/B hydrolyzes the 76-Gln-|-Phe-77 bond and inhibits neurotransmitter release. In terms of processing, (Microbial infection) Targeted and hydrolyzed by C.tetani toxin (tetX); 20 hours after treatment of spinal cord cells almost all the protein has been digested. Tetanus toxin hydrolyzes the 76-Gln-|-Phe-77 bond and inhibits neurotransmitter release. Expressed in the outer plexiform layer of the retina (at protein level).

Its subcellular location is the cytoplasmic vesicle. The protein resides in the secretory vesicle. It is found in the synaptic vesicle membrane. It localises to the cell membrane. Its function is as follows. Involved in the targeting and/or fusion of transport vesicles to their target membrane. Major SNARE protein of synaptic vesicles which mediates fusion of synaptic vesicles to release neurotransmitters. Essential for fast vesicular exocytosis and activity-dependent neurotransmitter release as well as fast endocytosis that mediates rapid reuse of synaptic vesicles. Modulates the gating characteristics of the delayed rectifier voltage-dependent potassium channel KCNB1. The protein is Vesicle-associated membrane protein 2 (Vamp2) of Mus musculus (Mouse).